The chain runs to 205 residues: uncharacterized protein (205 aa).

The segment covering 1-25 (MSNNNNEAQQPVESTNVESQQNVVQ) has biased composition (polar residues). A disordered region spans residues 1 to 205 (MSNNNNEAQQ…TSDPAQQVEA (205 aa)). The segment covering 32-79 (NENNDNNNNNNNNNNNNNNNNNNNNNNNNSNNNNNSSNNENNENNENN) has biased composition (low complexity). Residues 80–122 (SCEKSEQEKPKEPEEPVQEEKSKEPCDQQKVKENEPAEEKETE) are compositionally biased toward basic and acidic residues. Low complexity-rich tracts occupy residues 123-132 (PAAPVEPENP) and 146-162 (QHQQ…NGES). The segment covering 170–185 (SENKKRSIDEAGDIKD) has biased composition (basic and acidic residues). Residues 194–205 (VETSDPAQQVEA) show a composition bias toward polar residues.

This is an uncharacterized protein from Dictyostelium discoideum (Social amoeba).